Reading from the N-terminus, the 1423-residue chain is Fructan beta-fructosidase (1423 aa).

An N-terminal signal peptide occupies residues 1-39 (MEEETVCKNWFMRKSGKSWIFGCAVFFVLGLATALPVAA). Positions 44 to 161 (QTTAADTAVT…TNLEDMSHDT (118 aa)) are disordered. Over residues 69 to 126 (AVTETTQSEGTASKQLTTPAVADQTTEPTDNEPISSSDGASSPYQVTDTTEPQQTLTP) the composition is skewed to polar residues. Substrate contacts are provided by residues 455–458 (WAND), Gln-474, 513–514 (FS), 581–582 (RD), and Asp-783. The active site involves Asp-458. Residues 867–871 (ASVEV) form an involved in binding of sugars with beta-(2,6) linkages or binding of molecular weight fructans region. A BIG2 domain is found at 924–1002 (PVAMNTTTAK…SKENPSLSKT (79 aa)). Positions 1368–1385 (DVNSVQQTEPSVMSSSPK) are enriched in polar residues. The tract at residues 1368 to 1394 (DVNSVQQTEPSVMSSSPKATLPDTGDH) is disordered. The LPXTG sorting signal motif lies at 1388-1392 (LPDTG). The residue at position 1391 (Thr-1391) is a Pentaglycyl murein peptidoglycan amidated threonine. The propeptide at 1392–1423 (GDHKTDLSQLGVLAMIGSFLVEIAGYFKKRKD) is removed by sortase.

This sequence belongs to the glycosyl hydrolase 32 family.

Its subcellular location is the secreted. It localises to the cell wall. It carries out the reaction Hydrolysis of terminal, non-reducing (2-&gt;1)- and (2-&gt;6)-linked beta-D-fructofuranose residues in fructans.. In terms of biological role, this protein is a fructanase enzyme which degrades levans and inulins to fructose and also cleaves sucrose into glucose and fructose and can therefore function as an extracellular invertase. This Streptococcus mutans serotype c (strain ATCC 700610 / UA159) protein is Fructan beta-fructosidase (fruA).